Reading from the N-terminus, the 744-residue chain is Tripartite motif-containing protein 2 (744 aa).

Serine 10 carries the post-translational modification Phosphoserine. The segment at 23-64 adopts an RING-type zinc-finger fold; that stretch reads CSICLERYKNPKVLPCLHTFCERCLQNYIPAHSLTLSCPVCR. The B box-type zinc-finger motif lies at 113 to 154; sequence GKPLSCPNHDGNVMEFYCQSCETAMCRECTEGEHAEHPTVPL. Residues cysteine 118, histidine 121, cysteine 141, and histidine 146 each contribute to the Zn(2+) site. A Filamin repeat occupies 320–421; sequence TTNAVASETV…IRGSPFKLKV (102 aa). Threonine 371 carries the post-translational modification Phosphothreonine. A phosphoserine mark is found at serine 375, serine 424, and serine 428. The interval 432–462 is disordered; it reads EGVKRRVKSPGSGHVKQKAVKRPASMYSTGK. NHL repeat units follow at residues 473 to 516, 520 to 563, 564 to 605, 609 to 652, 656 to 699, and 700 to 743; these read IFRV…FSND, KSRF…FSSD, GKFK…FQPN, VTRF…FNQE, MLKF…FDGS, and GSFL…YRYL.

This sequence belongs to the TRIM/RBCC family. In terms of assembly, forms homooligomers. Interacts with TRIM3; this interaction reduces TRIM2 activity. Interacts with myosin V; myosin V may not be a substrate for ubiquitination. Interacts with NEFL. Interacts with phosphorylated BCL2L11. Interacts with SIRPA. Post-translationally, RING-type zinc finger-dependent and UBE2D1-dependent autoubiquitination.

The protein resides in the cytoplasm. It catalyses the reaction S-ubiquitinyl-[E2 ubiquitin-conjugating enzyme]-L-cysteine + [acceptor protein]-L-lysine = [E2 ubiquitin-conjugating enzyme]-L-cysteine + N(6)-ubiquitinyl-[acceptor protein]-L-lysine.. The protein operates within protein modification; protein ubiquitination. UBE2D1-dependent E3 ubiquitin-protein ligase that mediates the ubiquitination of NEFL and of phosphorylated BCL2L11. Plays a neuroprotective function. May play a role in neuronal rapid ischemic tolerance. Plays a role in antiviral immunity and limits New World arenavirus infection independently of its ubiquitin ligase activity. In Homo sapiens (Human), this protein is Tripartite motif-containing protein 2 (TRIM2).